A 42-amino-acid chain; its full sequence is Photosystem I reaction center subunit IX (42 aa).

The helical transmembrane segment at 7-27 (YLSTAPVIATIWFGFLAGLLI) threads the bilayer.

This sequence belongs to the PsaJ family.

The protein localises to the plastid. It localises to the chloroplast thylakoid membrane. Functionally, may help in the organization of the PsaE and PsaF subunits. In Chaetosphaeridium globosum (Charophycean green alga), this protein is Photosystem I reaction center subunit IX.